Here is a 529-residue protein sequence, read N- to C-terminus: V-set and immunoglobulin domain-containing protein 10 (529 aa).

A signal peptide spans 1-18 (MMITSAVVLYLLLLSHQT). 2 consecutive Ig-like C2-type domains span residues 19–110 (VSEE…QTLS) and 129–217 (PATF…QELL). The Extracellular portion of the chain corresponds to 21-411 (EEQVQQFVIG…LNVKTSAGNG (391 aa)). Asn34, Asn35, Asn46, Asn135, Asn147, Asn159, Asn211, Asn269, Asn280, Asn284, Asn330, Asn357, and Asn376 each carry an N-linked (GlcNAc...) asparagine glycan. Cys40 and Cys96 are disulfide-bonded. Cysteines 150 and 199 form a disulfide. In terms of domain architecture, Ig-like C2-type 3 spans 317 to 403 (PTGQPLATAL…GARELEVYLN (87 aa)). The cysteines at positions 335 and 387 are disulfide-linked. A helical transmembrane segment spans residues 412 to 432 (GAIVGIFVSVLVMMIGIVVGV). Residues 433 to 529 (TVYTKRDRIC…PQRAELQPAV (97 aa)) lie on the Cytoplasmic side of the membrane.

The protein localises to the membrane. The polypeptide is V-set and immunoglobulin domain-containing protein 10 (vsig10) (Danio rerio (Zebrafish)).